A 559-amino-acid chain; its full sequence is 2-isopropylmalate synthase (559 aa).

Positions 33–307 (PIWCSSDLRD…DPQLDFSDID (275 aa)) constitute a Pyruvate carboxyltransferase domain. Mg(2+) contacts are provided by D42, H246, H248, and N282. Positions 439-559 (ANTPYALVSH…SLSQQEAKAA (121 aa)) are regulatory domain.

It belongs to the alpha-IPM synthase/homocitrate synthase family. LeuA type 2 subfamily. Homodimer. It depends on Mg(2+) as a cofactor.

It localises to the cytoplasm. The catalysed reaction is 3-methyl-2-oxobutanoate + acetyl-CoA + H2O = (2S)-2-isopropylmalate + CoA + H(+). It functions in the pathway amino-acid biosynthesis; L-leucine biosynthesis; L-leucine from 3-methyl-2-oxobutanoate: step 1/4. Functionally, catalyzes the condensation of the acetyl group of acetyl-CoA with 3-methyl-2-oxobutanoate (2-ketoisovalerate) to form 3-carboxy-3-hydroxy-4-methylpentanoate (2-isopropylmalate). The sequence is that of 2-isopropylmalate synthase from Pseudomonas fluorescens (strain SBW25).